A 457-amino-acid chain; its full sequence is tRNA-2-methylthio-N(6)-dimethylallyladenosine synthase (457 aa).

An MTTase N-terminal domain is found at 2 to 119; it reads KKVFIKTFGC…LPELIDARRR (118 aa). The [4Fe-4S] cluster site is built by cysteine 11, cysteine 48, cysteine 82, cysteine 156, cysteine 160, and cysteine 163. The 234-residue stretch at 142 to 375 folds into the Radical SAM core domain; sequence RVEGPSAFVS…QATIDANMAR (234 aa). Positions 378–448 constitute a TRAM domain; the sequence is EGMVGSVQRI…PHSLRGDVVE (71 aa).

It belongs to the methylthiotransferase family. MiaB subfamily. As to quaternary structure, monomer. The cofactor is [4Fe-4S] cluster.

The protein resides in the cytoplasm. It carries out the reaction N(6)-dimethylallyladenosine(37) in tRNA + (sulfur carrier)-SH + AH2 + 2 S-adenosyl-L-methionine = 2-methylsulfanyl-N(6)-dimethylallyladenosine(37) in tRNA + (sulfur carrier)-H + 5'-deoxyadenosine + L-methionine + A + S-adenosyl-L-homocysteine + 2 H(+). Its function is as follows. Catalyzes the methylthiolation of N6-(dimethylallyl)adenosine (i(6)A), leading to the formation of 2-methylthio-N6-(dimethylallyl)adenosine (ms(2)i(6)A) at position 37 in tRNAs that read codons beginning with uridine. This Ralstonia nicotianae (strain ATCC BAA-1114 / GMI1000) (Ralstonia solanacearum) protein is tRNA-2-methylthio-N(6)-dimethylallyladenosine synthase.